A 161-amino-acid polypeptide reads, in one-letter code: MPSFDTVCEANLVDVRNAVENTAKEIATRFDFKGTAASITIQEREITLIGDADFQLTQIEDVLRNKLTKRSVDVRFLDIGEVRKIGGDKVKQLLKVRSGIESELARKIQKLLKDSKLKVQGAIQEDKVRVTGAKRDDLQAAMALIRKEVTDVPLSFDNFRD.

It belongs to the YajQ family.

Functionally, nucleotide-binding protein. This chain is Nucleotide-binding protein Veis_3464, found in Verminephrobacter eiseniae (strain EF01-2).